We begin with the raw amino-acid sequence, 177 residues long: Adenine phosphoribosyltransferase (177 aa).

It belongs to the purine/pyrimidine phosphoribosyltransferase family. Homodimer.

The protein resides in the cytoplasm. It carries out the reaction AMP + diphosphate = 5-phospho-alpha-D-ribose 1-diphosphate + adenine. The protein operates within purine metabolism; AMP biosynthesis via salvage pathway; AMP from adenine: step 1/1. Catalyzes a salvage reaction resulting in the formation of AMP, that is energically less costly than de novo synthesis. The sequence is that of Adenine phosphoribosyltransferase from Chlorobium phaeobacteroides (strain DSM 266 / SMG 266 / 2430).